The following is a 445-amino-acid chain: UPF0210 protein llmg_1581 (445 aa).

It belongs to the UPF0210 family. In terms of assembly, homodimer.

This chain is UPF0210 protein llmg_1581, found in Lactococcus lactis subsp. cremoris (strain MG1363).